The chain runs to 284 residues: 2-dehydro-3-deoxyphosphooctonate aldolase (284 aa).

Belongs to the KdsA family.

The protein resides in the cytoplasm. The catalysed reaction is D-arabinose 5-phosphate + phosphoenolpyruvate + H2O = 3-deoxy-alpha-D-manno-2-octulosonate-8-phosphate + phosphate. Its pathway is carbohydrate biosynthesis; 3-deoxy-D-manno-octulosonate biosynthesis; 3-deoxy-D-manno-octulosonate from D-ribulose 5-phosphate: step 2/3. The protein operates within bacterial outer membrane biogenesis; lipopolysaccharide biosynthesis. This chain is 2-dehydro-3-deoxyphosphooctonate aldolase, found in Histophilus somni (strain 129Pt) (Haemophilus somnus).